The sequence spans 277 residues: 2-dehydro-3-deoxyphosphooctonate aldolase (277 aa).

The protein belongs to the KdsA family.

It is found in the cytoplasm. The catalysed reaction is D-arabinose 5-phosphate + phosphoenolpyruvate + H2O = 3-deoxy-alpha-D-manno-2-octulosonate-8-phosphate + phosphate. It functions in the pathway carbohydrate biosynthesis; 3-deoxy-D-manno-octulosonate biosynthesis; 3-deoxy-D-manno-octulosonate from D-ribulose 5-phosphate: step 2/3. It participates in bacterial outer membrane biogenesis; lipopolysaccharide biosynthesis. The chain is 2-dehydro-3-deoxyphosphooctonate aldolase from Vesicomyosocius okutanii subsp. Calyptogena okutanii (strain HA).